Here is a 135-residue protein sequence, read N- to C-terminus: Large ribosomal subunit protein bL12c (135 aa).

This sequence belongs to the bacterial ribosomal protein bL12 family. In terms of assembly, homodimer. Part of the ribosomal stalk of the 50S ribosomal subunit. Forms a multimeric L10(L12)X complex, where L10 forms an elongated spine to which 2 to 4 L12 dimers bind in a sequential fashion. Binds GTP-bound translation factors.

It is found in the plastid. The protein localises to the chloroplast. Forms part of the ribosomal stalk which helps the ribosome interact with GTP-bound translation factors. Is thus essential for accurate translation. The polypeptide is Large ribosomal subunit protein bL12c (Chara vulgaris (Common stonewort)).